A 192-amino-acid chain; its full sequence is E3 ubiquitin-protein ligase RNF183 (192 aa).

Over 1–161 (MAEQQGRELE…RECFRNPQFR (161 aa)) the chain is Cytoplasmic. The RING-type zinc finger occupies 13 to 60 (CPVCWNPFNNTFHTPKMLDCCHSFCVECLAHLSLVTPARRRLLCPLCR). A helical; Anchor for type IV membrane protein membrane pass occupies residues 162–182 (IFAYLMAVILSVTLLLIFSIF). Residues 183–192 (WTKQFLWGVG) are Lumenal-facing.

Interacts with FATE1. Interacts with SEC16A. Interacts with BCL2L1. Post-translationally, autoubiquitinated (in vitro). Kidney and testis.

The protein localises to the endoplasmic reticulum membrane. Its subcellular location is the endoplasmic reticulum. It localises to the golgi apparatus. It is found in the cis-Golgi network membrane. The protein resides in the lysosome membrane. It carries out the reaction S-ubiquitinyl-[E2 ubiquitin-conjugating enzyme]-L-cysteine + [acceptor protein]-L-lysine = [E2 ubiquitin-conjugating enzyme]-L-cysteine + N(6)-ubiquitinyl-[acceptor protein]-L-lysine.. The protein operates within protein modification; protein ubiquitination. Functionally, acts as an E3 ubiquitin ligase catalyzing the covalent attachment of ubiquitin moieties onto substrate proteins. Triggers apoptosis in response to prolonged ER stress by mediating the polyubiquitination and subsequent proteasomal degradation of BCL2L1. May collaborate with FATE1 to restrain BIK protein levels thus regulating apoptotic signaling. The polypeptide is E3 ubiquitin-protein ligase RNF183 (RNF183) (Homo sapiens (Human)).